Reading from the N-terminus, the 250-residue chain is 2,3-bisphosphoglycerate-dependent phosphoglycerate mutase (250 aa).

Residues 10–17 (RHGESEWN), 23–24 (TG), Arg-62, 89–92 (ERHY), Lys-100, 116–117 (RR), and 185–186 (GN) each bind substrate. The active-site Tele-phosphohistidine intermediate is His-11. The active-site Proton donor/acceptor is the Glu-89.

It belongs to the phosphoglycerate mutase family. BPG-dependent PGAM subfamily. Homodimer.

It catalyses the reaction (2R)-2-phosphoglycerate = (2R)-3-phosphoglycerate. It functions in the pathway carbohydrate degradation; glycolysis; pyruvate from D-glyceraldehyde 3-phosphate: step 3/5. In terms of biological role, catalyzes the interconversion of 2-phosphoglycerate and 3-phosphoglycerate. The sequence is that of 2,3-bisphosphoglycerate-dependent phosphoglycerate mutase from Edwardsiella ictaluri (strain 93-146).